The following is a 575-amino-acid chain: Glycine--tRNA ligase (575 aa).

The substrate site is built by Arg-96 and Glu-162. Residues 194–196, 204–209, 327–328, and 450–453 contribute to the ATP site; these read RNE, IRLREF, EC, and GIDR. Position 209–213 (209–213) interacts with substrate; that stretch reads FTQAE. 446–450 provides a ligand contact to substrate; it reads EPSYG.

The protein belongs to the class-II aminoacyl-tRNA synthetase family.

It localises to the cytoplasm. The enzyme catalyses tRNA(Gly) + glycine + ATP = glycyl-tRNA(Gly) + AMP + diphosphate. In terms of biological role, catalyzes the attachment of glycine to tRNA(Gly). The polypeptide is Glycine--tRNA ligase (Methanococcus maripaludis (strain C5 / ATCC BAA-1333)).